The primary structure comprises 509 residues: tRNA-2-methylthio-N(6)-dimethylallyladenosine synthase (509 aa).

Residues Met-1–Ser-15 are compositionally biased toward polar residues. Residues Met-1–Tyr-26 are disordered. Basic and acidic residues predominate over residues Thr-16–Lys-25. The MTTase N-terminal domain occupies Arg-66–Phe-184. [4Fe-4S] cluster is bound by residues Cys-75, Cys-111, Cys-145, Cys-221, Cys-225, and Cys-228. Residues Arg-207–Glu-437 enclose the Radical SAM core domain. The 64-residue stretch at Asp-440–Glu-503 folds into the TRAM domain.

The protein belongs to the methylthiotransferase family. MiaB subfamily. In terms of assembly, monomer. Requires [4Fe-4S] cluster as cofactor.

Its subcellular location is the cytoplasm. It carries out the reaction N(6)-dimethylallyladenosine(37) in tRNA + (sulfur carrier)-SH + AH2 + 2 S-adenosyl-L-methionine = 2-methylsulfanyl-N(6)-dimethylallyladenosine(37) in tRNA + (sulfur carrier)-H + 5'-deoxyadenosine + L-methionine + A + S-adenosyl-L-homocysteine + 2 H(+). Its function is as follows. Catalyzes the methylthiolation of N6-(dimethylallyl)adenosine (i(6)A), leading to the formation of 2-methylthio-N6-(dimethylallyl)adenosine (ms(2)i(6)A) at position 37 in tRNAs that read codons beginning with uridine. The sequence is that of tRNA-2-methylthio-N(6)-dimethylallyladenosine synthase from Bacillus thuringiensis (strain Al Hakam).